The sequence spans 231 residues: Caspase-like protein (231 aa).

This sequence belongs to the peptidase C14A family.

The polypeptide is Caspase-like protein (Trichoplusia ni ascovirus 2c (TnAV-2c)).